Consider the following 284-residue polypeptide: Tropomyosin alpha-1 chain (284 aa).

A disordered region spans residues 1–38; that stretch reads MDAIKKKMQMLKLDKENALDRAEQAEADKKGAEDKSKQ. Residues 1–284 are a coiled coil; it reads MDAIKKKMQM…DHALNDMTSI (284 aa). Positions 12–38 are enriched in basic and acidic residues; that stretch reads KLDKENALDRAEQAEADKKGAEDKSKQ.

The protein belongs to the tropomyosin family. In terms of assembly, homodimer. Heterodimer of an alpha (TPM1, TPM3 or TPM4) and a beta (TPM2) chain.

It localises to the cytoplasm. The protein localises to the cytoskeleton. In terms of biological role, binds to actin filaments in muscle and non-muscle cells. Plays a central role, in association with the troponin complex, in the calcium dependent regulation of vertebrate striated muscle contraction. Smooth muscle contraction is regulated by interaction with caldesmon. In non-muscle cells is implicated in stabilizing cytoskeleton actin filaments. This Xenopus laevis (African clawed frog) protein is Tropomyosin alpha-1 chain (tpm1).